Reading from the N-terminus, the 326-residue chain is MKRPRAPSGSDGESDGPIDVGQENDLSQMARPLTTPSPSQMQARKKRRGIIEKRRRDRINSSLSELRRLVPTAFEKQGSSKLEKAEVLQMTVDHLKMLHASGGTGFFDARALAVDFRSIGFRECLTEVIRYLGVLEGPSSHADPVRIRLLSHLKSYAAEMEPSPTTTSALAFPVWPWSFLHSCPGLPSLNSQLAILGRVPGPVLPSISSPPYPISALRSAPVHRPAGTIPPTRRNLLPSRGVTSTQRAHLPERPAAPPPTALDARAARSIVPIPPCSPTTAPGAGKSDDNVSGSISSPCPSGPTGRPAGAVFYHSWVSEITEIGAF.

The interval 1 to 56 (MKRPRAPSGSDGESDGPIDVGQENDLSQMARPLTTPSPSQMQARKKRRGIIEKRRR) is disordered. The transcriptional repression and interaction with NCOR1 and SIN3A stretch occupies residues 42–111 (QARKKRRGII…GGTGFFDARA (70 aa)). The bHLH domain occupies 43–98 (ARKKRRGIIEKRRRDRINSSLSELRRLVPTAFEKQGSSKLEKAEVLQMTVDHLKML). Residues 116–153 (FRSIGFRECLTEVIRYLGVLEGPSSHADPVRIRLLSHL) enclose the Orange domain. 2 disordered regions span residues 223–260 (HRPA…PPPT) and 272–306 (PIPP…PTGR). Residues 292–305 (SGSISSPCPSGPTG) show a composition bias toward low complexity.

This sequence belongs to the HEY family. Interacts with HES1, HDAC1, NCOR1 and SIN3A. Self-associates. Interacts with GATA4, GATA6, HEY1 and HEY2. In terms of tissue distribution, expressed in heart and at lower levels in brain, lung, muscle, ovary and testis.

It is found in the nucleus. Transcriptional repressor which binds preferentially to the canonical E box sequence 5'-CACGTG-3'. Downstream effector of Notch signaling required for cardiovascular development. Specifically required for the Notch-induced endocardial epithelial to mesenchymal transition, which is itself criticial for cardiac valve and septum development. Represses transcription by the cardiac transcriptional activators GATA4 and GATA6. The protein is Hairy/enhancer-of-split related with YRPW motif-like protein (Heyl) of Mus musculus (Mouse).